The chain runs to 208 residues: ATP-dependent Clp protease proteolytic subunit (208 aa).

Ser-101 acts as the Nucleophile in catalysis. Residue His-126 is part of the active site.

It belongs to the peptidase S14 family. As to quaternary structure, component of the chloroplastic Clp protease core complex.

The protein localises to the plastid. It localises to the chloroplast stroma. The catalysed reaction is Hydrolysis of proteins to small peptides in the presence of ATP and magnesium. alpha-casein is the usual test substrate. In the absence of ATP, only oligopeptides shorter than five residues are hydrolyzed (such as succinyl-Leu-Tyr-|-NHMec, and Leu-Tyr-Leu-|-Tyr-Trp, in which cleavage of the -Tyr-|-Leu- and -Tyr-|-Trp bonds also occurs).. In terms of biological role, cleaves peptides in various proteins in a process that requires ATP hydrolysis. Has a chymotrypsin-like activity. Plays a major role in the degradation of misfolded proteins. This Nephroselmis olivacea (Green alga) protein is ATP-dependent Clp protease proteolytic subunit.